Here is a 332-residue protein sequence, read N- to C-terminus: MKQVQTKRDWKKLAYDVVEEKVITKEDAIAILEADDTEILEIMNAAYIIRHHHFGKKVKLNMIINTKSGLCPEDCGYCSQSIISEAPIDKYAWLTQEKIVEGAHEAIRRKAGTYCIVASGRRPTDKEVNHVIGAVKEIRETTDLKICCCLGFLNEDQAGRLAEAGVHRYNHNLNTHANNYESICSTHTYDDRVDTVQKAKQAGISPCSGAIFGMGETIEERAEIAFELQRIDADSIPCNFLVAVKGTPLEGQKELTPVECLKVLAMMRFVNPTKEIRISGGREINLRSVQPIGLFAANSIFVGDYLTTAGQEPTADWGMIEDLGFEIEECAL.

In terms of domain architecture, Radical SAM core spans 53-282; it reads HFGKKVKLNM…TKEIRISGGR (230 aa). The [4Fe-4S] cluster site is built by Cys71, Cys75, and Cys78. [2Fe-2S] cluster contacts are provided by Cys115, Cys147, Cys207, and Arg277.

The protein belongs to the radical SAM superfamily. Biotin synthase family. In terms of assembly, homodimer. It depends on [4Fe-4S] cluster as a cofactor. [2Fe-2S] cluster is required as a cofactor.

It catalyses the reaction (4R,5S)-dethiobiotin + (sulfur carrier)-SH + 2 reduced [2Fe-2S]-[ferredoxin] + 2 S-adenosyl-L-methionine = (sulfur carrier)-H + biotin + 2 5'-deoxyadenosine + 2 L-methionine + 2 oxidized [2Fe-2S]-[ferredoxin]. It participates in cofactor biosynthesis; biotin biosynthesis; biotin from 7,8-diaminononanoate: step 2/2. Catalyzes the conversion of dethiobiotin (DTB) to biotin by the insertion of a sulfur atom into dethiobiotin via a radical-based mechanism. The chain is Biotin synthase from Bacillus cereus (strain AH187).